The following is a 312-amino-acid chain: Glyoxylate/hydroxypyruvate reductase A (312 aa).

The active site involves R227. The Proton donor role is filled by H275.

This sequence belongs to the D-isomer specific 2-hydroxyacid dehydrogenase family. GhrA subfamily.

It is found in the cytoplasm. The enzyme catalyses glycolate + NADP(+) = glyoxylate + NADPH + H(+). The catalysed reaction is (R)-glycerate + NAD(+) = 3-hydroxypyruvate + NADH + H(+). It catalyses the reaction (R)-glycerate + NADP(+) = 3-hydroxypyruvate + NADPH + H(+). Functionally, catalyzes the NADPH-dependent reduction of glyoxylate and hydroxypyruvate into glycolate and glycerate, respectively. The sequence is that of Glyoxylate/hydroxypyruvate reductase A from Escherichia coli O17:K52:H18 (strain UMN026 / ExPEC).